The chain runs to 403 residues: Phosphopentomutase (403 aa).

Aspartate 13, aspartate 298, histidine 303, aspartate 339, histidine 340, and histidine 351 together coordinate Mn(2+).

The protein belongs to the phosphopentomutase family. Mn(2+) serves as cofactor.

The protein localises to the cytoplasm. The catalysed reaction is 2-deoxy-alpha-D-ribose 1-phosphate = 2-deoxy-D-ribose 5-phosphate. The enzyme catalyses alpha-D-ribose 1-phosphate = D-ribose 5-phosphate. The protein operates within carbohydrate degradation; 2-deoxy-D-ribose 1-phosphate degradation; D-glyceraldehyde 3-phosphate and acetaldehyde from 2-deoxy-alpha-D-ribose 1-phosphate: step 1/2. Isomerase that catalyzes the conversion of deoxy-ribose 1-phosphate (dRib-1-P) and ribose 1-phosphate (Rib-1-P) to deoxy-ribose 5-phosphate (dRib-5-P) and ribose 5-phosphate (Rib-5-P), respectively. This Streptococcus pyogenes serotype M3 (strain ATCC BAA-595 / MGAS315) protein is Phosphopentomutase.